A 530-amino-acid chain; its full sequence is Ubiquitin carboxyl-terminal hydrolase 17-like protein 5 (530 aa).

Positions 80–375 (AGLQNMGNTC…QAYVLFYIQK (296 aa)) constitute a USP domain. Cys-89 acts as the Nucleophile in catalysis. His-334 (proton acceptor) is an active-site residue. Composition is skewed to basic and acidic residues over residues 382-392 (SESVSRGREPR) and 398-412 (DTDRRATQGELKRDH). 2 disordered regions span residues 382-412 (SESVSRGREPRALGAEDTDRRATQGELKRDH) and 477-530 (NHHP…LVCQ). Positions 493–505 (TPTHQESMNTGTL) are enriched in polar residues. The segment covering 510–524 (GRARRSKGKNKHSKR) has biased composition (basic residues).

Belongs to the peptidase C19 family. USP17 subfamily.

It localises to the nucleus. It is found in the endoplasmic reticulum. It carries out the reaction Thiol-dependent hydrolysis of ester, thioester, amide, peptide and isopeptide bonds formed by the C-terminal Gly of ubiquitin (a 76-residue protein attached to proteins as an intracellular targeting signal).. Deubiquitinating enzyme that removes conjugated ubiquitin from specific proteins to regulate different cellular processes that may include cell proliferation, progression through the cell cycle, apoptosis, cell migration, and the cellular response to viral infection. This chain is Ubiquitin carboxyl-terminal hydrolase 17-like protein 5 (USP17L5), found in Homo sapiens (Human).